The primary structure comprises 698 residues: Zinc finger CCCH domain-containing protein 7 (698 aa).

Pro residues predominate over residues 1–11 (MEEPSPVPPAA). Disordered regions lie at residues 1 to 23 (MEEPSPVPPAAAPASLAAAPPTT), 56 to 95 (HAARPDAEVEPAAAAAIPPGGSGGLPHGDSPPPADVGGDR), 109 to 137 (APHETPSTSASPDAAVNPTTDPGVVPQGT), and 272 to 300 (GSLDGGGGFEEGEIEGDTQNLDADDSGNS). Low complexity-rich tracts occupy residues 12 to 21 (APASLAAAPP) and 65 to 74 (EPAAAAAIPP). A compositionally biased stretch (acidic residues) spans 281–300 (EEGEIEGDTQNLDADDSGNS). C3H1-type zinc fingers lie at residues 429–456 (PKVVKVCHFYLHGKCQQGNLCKFSHDTT), 458–485 (LTKSKPCTHYARGSCLKGDDCPYDHELS), and 486–511 (KYPCHNFMENGMCIRGDKCKFSHVIP). Disordered stretches follow at residues 512 to 553 (TAEG…GEPA) and 607 to 682 (TEKH…QHEV). 2 stretches are compositionally biased toward polar residues: residues 535-548 (CQEQTSRQKTSTVY) and 665-680 (SLPTTAAVPSSVSTQH).

The polypeptide is Zinc finger CCCH domain-containing protein 7 (Oryza sativa subsp. japonica (Rice)).